Consider the following 274-residue polypeptide: Putative pyruvate, phosphate dikinase regulatory protein 1 (274 aa).

ADP is bound at residue 149 to 156 (GISRTSKT).

This sequence belongs to the pyruvate, phosphate/water dikinase regulatory protein family. PDRP subfamily.

The catalysed reaction is N(tele)-phospho-L-histidyl/L-threonyl-[pyruvate, phosphate dikinase] + ADP = N(tele)-phospho-L-histidyl/O-phospho-L-threonyl-[pyruvate, phosphate dikinase] + AMP + H(+). It catalyses the reaction N(tele)-phospho-L-histidyl/O-phospho-L-threonyl-[pyruvate, phosphate dikinase] + phosphate + H(+) = N(tele)-phospho-L-histidyl/L-threonyl-[pyruvate, phosphate dikinase] + diphosphate. Its function is as follows. Bifunctional serine/threonine kinase and phosphorylase involved in the regulation of the pyruvate, phosphate dikinase (PPDK) by catalyzing its phosphorylation/dephosphorylation. The chain is Putative pyruvate, phosphate dikinase regulatory protein 1 from Listeria welshimeri serovar 6b (strain ATCC 35897 / DSM 20650 / CCUG 15529 / CIP 8149 / NCTC 11857 / SLCC 5334 / V8).